We begin with the raw amino-acid sequence, 30 residues long: Vitri peptide A (30 aa).

Positions 1–30 form a cross-link, cyclopeptide (Gly-Asn); that stretch reads GIPCGESCVWIPCITSAIGCSCKSKVCYRN. Disulfide bonds link Cys-4–Cys-20, Cys-8–Cys-22, and Cys-13–Cys-27.

In terms of processing, this is a cyclic peptide.

Probably participates in a plant defense mechanism. Has strong cytotoxic activity against human lymphoma U-937 GTB and human myeloma RPMI-8226/s cell lines. The chain is Vitri peptide A from Viola arvensis (European field pansy).